Consider the following 526-residue polypeptide: Bifunctional purine biosynthesis protein PurH (526 aa).

The region spanning 1 to 145 (MIRTALLSVS…KNHQDVTVLI (145 aa)) is the MGS-like domain.

It belongs to the PurH family.

It catalyses the reaction (6R)-10-formyltetrahydrofolate + 5-amino-1-(5-phospho-beta-D-ribosyl)imidazole-4-carboxamide = 5-formamido-1-(5-phospho-D-ribosyl)imidazole-4-carboxamide + (6S)-5,6,7,8-tetrahydrofolate. It carries out the reaction IMP + H2O = 5-formamido-1-(5-phospho-D-ribosyl)imidazole-4-carboxamide. It functions in the pathway purine metabolism; IMP biosynthesis via de novo pathway; 5-formamido-1-(5-phospho-D-ribosyl)imidazole-4-carboxamide from 5-amino-1-(5-phospho-D-ribosyl)imidazole-4-carboxamide (10-formyl THF route): step 1/1. The protein operates within purine metabolism; IMP biosynthesis via de novo pathway; IMP from 5-formamido-1-(5-phospho-D-ribosyl)imidazole-4-carboxamide: step 1/1. The protein is Bifunctional purine biosynthesis protein PurH of Polynucleobacter asymbioticus (strain DSM 18221 / CIP 109841 / QLW-P1DMWA-1) (Polynucleobacter necessarius subsp. asymbioticus).